A 310-amino-acid chain; its full sequence is tRNA dimethylallyltransferase (310 aa).

24–31 (GPTASGKT) serves as a coordination point for ATP. Substrate is bound at residue 26–31 (TASGKT). Residues 49 to 52 (DSRQ) form an interaction with substrate tRNA region.

It belongs to the IPP transferase family. In terms of assembly, monomer. Requires Mg(2+) as cofactor.

The catalysed reaction is adenosine(37) in tRNA + dimethylallyl diphosphate = N(6)-dimethylallyladenosine(37) in tRNA + diphosphate. Catalyzes the transfer of a dimethylallyl group onto the adenine at position 37 in tRNAs that read codons beginning with uridine, leading to the formation of N6-(dimethylallyl)adenosine (i(6)A). The protein is tRNA dimethylallyltransferase of Synechococcus sp. (strain WH7803).